Consider the following 431-residue polypeptide: Phosphate regulon sensor protein PhoR (431 aa).

Residues 1–13 (MLERLSWKRLALE) lie on the Cytoplasmic side of the membrane. A helical transmembrane segment spans residues 14–34 (LFLACIPALILGAFVGHLPWF). At 35 to 38 (LLAA) the chain is on the periplasmic side. Residues 39-59 (VTGLLIWHFWNLMRLSWWLWV) form a helical membrane-spanning segment. Residues 60-431 (DRSMTPPPGR…PERLIARNDA (372 aa)) lie on the Cytoplasmic side of the membrane. The region spanning 98–166 (KRFRSGAESL…KQRDFSKPLN (69 aa)) is the PAS domain. Residues 210–425 (NVSHELRTPL…RFSFLLPERL (216 aa)) enclose the Histidine kinase domain. The residue at position 213 (His213) is a Phosphohistidine; by autocatalysis.

The protein resides in the cell inner membrane. The catalysed reaction is ATP + protein L-histidine = ADP + protein N-phospho-L-histidine.. In terms of biological role, member of the two-component regulatory system PhoR/PhoB involved in the phosphate regulon genes expression. PhoR may function as a membrane-associated protein kinase that phosphorylates PhoB in response to environmental signals. The sequence is that of Phosphate regulon sensor protein PhoR (phoR) from Klebsiella pneumoniae.